A 538-amino-acid polypeptide reads, in one-letter code: Phosphoenolpyruvate carboxykinase (ATP) (538 aa).

Positions 64, 205, and 211 each coordinate substrate. Residues Lys-211, His-230, and 246–254 (GLSGTGKTT) each bind ATP. Residues Lys-211 and His-230 each coordinate Mn(2+). Asp-267 is a binding site for Mn(2+). ATP-binding positions include Glu-295, Arg-331, 447 to 448 (RI), and Thr-453. Arg-331 contacts substrate.

The protein belongs to the phosphoenolpyruvate carboxykinase (ATP) family. Monomer. It depends on Mn(2+) as a cofactor.

It localises to the cytoplasm. The enzyme catalyses oxaloacetate + ATP = phosphoenolpyruvate + ADP + CO2. The protein operates within carbohydrate biosynthesis; gluconeogenesis. Involved in the gluconeogenesis. Catalyzes the conversion of oxaloacetate (OAA) to phosphoenolpyruvate (PEP) through direct phosphoryl transfer between the nucleoside triphosphate and OAA. The protein is Phosphoenolpyruvate carboxykinase (ATP) of Pasteurella multocida (strain Pm70).